Here is a 475-residue protein sequence, read N- to C-terminus: NADH-quinone oxidoreductase subunit N (475 aa).

Helical transmembrane passes span 7-27, 40-60, 74-94, 105-125, 127-147, 161-181, 191-211, 242-262, 266-286, 295-315, 321-341, 365-385, 399-419, and 448-468; these read ISIA…VLLG, LLGA…SAVD, FIAI…LVAG, FEYT…LSAN, LMTL…LAAF, YFVL…LVYG, IAAA…LMAL, APKL…FGVY, WMLI…FGGL, LAYS…AGEV, VLTY…IVLA, LAVA…MAGF, ELYW…GYYL, and GATI…TGII.

Belongs to the complex I subunit 2 family. NDH-1 is composed of 14 different subunits. Subunits NuoA, H, J, K, L, M, N constitute the membrane sector of the complex.

The protein resides in the cell inner membrane. The catalysed reaction is a quinone + NADH + 5 H(+)(in) = a quinol + NAD(+) + 4 H(+)(out). NDH-1 shuttles electrons from NADH, via FMN and iron-sulfur (Fe-S) centers, to quinones in the respiratory chain. The immediate electron acceptor for the enzyme in this species is believed to be ubiquinone. Couples the redox reaction to proton translocation (for every two electrons transferred, four hydrogen ions are translocated across the cytoplasmic membrane), and thus conserves the redox energy in a proton gradient. The sequence is that of NADH-quinone oxidoreductase subunit N from Hirschia baltica (strain ATCC 49814 / DSM 5838 / IFAM 1418).